We begin with the raw amino-acid sequence, 123 residues long: Fluoride-specific ion channel FluC 2 (123 aa).

4 helical membrane-spanning segments follow: residues 3–23 (LDGF…RMFI), 38–58 (ILIV…LNIT), 62–82 (LILF…SFIY), and 94–114 (LILL…FCLG). Na(+)-binding residues include Gly-72 and Ser-75.

It belongs to the fluoride channel Fluc/FEX (TC 1.A.43) family.

The protein localises to the cell inner membrane. It carries out the reaction fluoride(in) = fluoride(out). Its activity is regulated as follows. Na(+) is not transported, but it plays an essential structural role and its presence is essential for fluoride channel function. Functionally, fluoride-specific ion channel. Important for reducing fluoride concentration in the cell, thus reducing its toxicity. This is Fluoride-specific ion channel FluC 2 from Prochlorococcus marinus subsp. pastoris (strain CCMP1986 / NIES-2087 / MED4).